We begin with the raw amino-acid sequence, 137 residues long: Large-conductance mechanosensitive channel (137 aa).

The next 3 helical transmembrane spans lie at 15-35 (IDLA…NSIV), 38-58 (IFMP…MFIQ), and 80-100 (GNFI…FLFV).

The protein belongs to the MscL family. Homopentamer.

The protein resides in the cell inner membrane. Its function is as follows. Channel that opens in response to stretch forces in the membrane lipid bilayer. May participate in the regulation of osmotic pressure changes within the cell. This chain is Large-conductance mechanosensitive channel, found in Bartonella henselae (strain ATCC 49882 / DSM 28221 / CCUG 30454 / Houston 1) (Rochalimaea henselae).